Here is a 470-residue protein sequence, read N- to C-terminus: Nuclear segregation protein BFR1 (470 aa).

Coiled-coil stretches lie at residues 17–178 (DKKL…NGLN) and 237–281 (NEFK…THAK). At Ser-260 the chain carries Phosphoserine. Thr-336 carries the post-translational modification Phosphothreonine. Residues 346–368 (APSKSKKYKKKNQQKNTENEQPA) are disordered. Residues 349 to 358 (KSKKYKKKNQ) are compositionally biased toward basic residues. A Phosphoserine modification is found at Ser-369. Positions 398-469 (NSDDVKITVE…EQEESEKDKE (72 aa)) form a coiled coil. Positions 447–470 (QQVKKELEEKRLKEQEESEKDKEN) are disordered.

In terms of biological role, implicated in secretion, nuclear segregation and in maintenance of cell size. The polypeptide is Nuclear segregation protein BFR1 (BFR1) (Saccharomyces cerevisiae (strain ATCC 204508 / S288c) (Baker's yeast)).